The primary structure comprises 452 residues: Phosphoglucosamine mutase (452 aa).

Serine 108 serves as the catalytic Phosphoserine intermediate. Residues serine 108, aspartate 247, aspartate 249, and aspartate 251 each coordinate Mg(2+). Residue serine 108 is modified to Phosphoserine.

The protein belongs to the phosphohexose mutase family. Mg(2+) serves as cofactor. Post-translationally, activated by phosphorylation.

The catalysed reaction is alpha-D-glucosamine 1-phosphate = D-glucosamine 6-phosphate. Functionally, catalyzes the conversion of glucosamine-6-phosphate to glucosamine-1-phosphate. This Paraburkholderia xenovorans (strain LB400) protein is Phosphoglucosamine mutase.